Reading from the N-terminus, the 765-residue chain is Single-minded homolog 1 (765 aa).

The bHLH domain maps to 1-53; it reads MKEKSKNAARTRREKENSEFYELAKLLPLPSAITSQLDKASIIRLTTSYLKMR. 2 PAS domains span residues 77–147 and 218–288; these read GREL…QPYH and PPSA…LVKG. Residues 292–335 enclose the PAC domain; it reads TKYYRFLAKQGGWVWVQSYATIVHNSRSSRPHCIVSVNYVLTDT. The region spanning 336-765 is the Single-minded C-terminal domain; it reads EYKGLQLSLD…GTSVIITNGS (430 aa). Composition is skewed to low complexity over residues 352–365 and 373–385; these read PTFSYTSSSTPTIS and SRLSSSKSKSRTS. Disordered regions lie at residues 352-428 and 527-560; these read PTFS…PGSQ and WDEDSVVSSPDPGSASESGDRYRTEQYQNSPHEP. The short motif at 368 to 387 is the Nuclear localization signal element; sequence RKGAKSRLSSSKSKSRTSPY. A compositionally biased stretch (basic and acidic residues) spans 394–404; that stretch reads HTERSESDHDS.

Efficient DNA binding requires dimerization with another bHLH protein. Heterodimer; forms a heterodimer with ARNT, ARNT2. In terms of tissue distribution, detected in lung, skeletal muscle and kidney. During fetal development it is found in the CNS, developing kidney, mesodermal and endodermal tissues, including developing somites, mesonephric duct, and foregut.

Its subcellular location is the nucleus. Transcriptional factor that may have pleiotropic effects during embryogenesis and in the adult. This is Single-minded homolog 1 (Sim1) from Mus musculus (Mouse).